We begin with the raw amino-acid sequence, 503 residues long: ATP synthase subunit alpha (503 aa).

171–178 contacts ATP; sequence DRQTGKTA.

The protein belongs to the ATPase alpha/beta chains family. In terms of assembly, F-type ATPases have 2 components, CF(1) - the catalytic core - and CF(0) - the membrane proton channel. CF(1) has five subunits: alpha(3), beta(3), gamma(1), delta(1), epsilon(1). CF(0) has four main subunits: a(1), b(1), b'(1) and c(9-12).

The protein resides in the cellular thylakoid membrane. It catalyses the reaction ATP + H2O + 4 H(+)(in) = ADP + phosphate + 5 H(+)(out). Functionally, produces ATP from ADP in the presence of a proton gradient across the membrane. The alpha chain is a regulatory subunit. This Synechococcus sp. (strain PCC 6716) protein is ATP synthase subunit alpha.